Reading from the N-terminus, the 425-residue chain is uncharacterized protein (425 aa).

12 helical membrane passes run 15-35 (LICAFTGFNSGLPLFVLSQML), 48-68 (LIGAVTGVMLPYGLKFLWAPL), 84-104 (MLLSQVALLILLYIISLFDPL), 107-127 (LGTVANIALLIAFFSATQDIV), 149-169 (INAYRIAGLIPGGLSLYLAAI), 174-194 (TVFLWTALCMLAGIFMTLFLA), 225-245 (VIQAIGFLLFLFLYKFGDSFA), 271-291 (ALWSSILSGLAGGMIMLKLGI), 295-315 (LWLFGLVQMVTIGGFIWLAAF), 331-351 (VVIAAEYIGVGLGTAAFVAFM), 370-390 (LSALPSKVLGILSGYVVGAVG), and 395-415 (FWFCLFLAIPGMLCLFWVAPL).

This sequence to E.coli AmpG and yeast YBR220c.

The protein resides in the cell inner membrane. This is an uncharacterized protein from Haemophilus influenzae (strain ATCC 51907 / DSM 11121 / KW20 / Rd).